The sequence spans 213 residues: dTTP/UTP pyrophosphatase (213 aa).

Residue D92 is the Proton acceptor of the active site.

This sequence belongs to the Maf family. YhdE subfamily. It depends on a divalent metal cation as a cofactor.

It is found in the cytoplasm. It catalyses the reaction dTTP + H2O = dTMP + diphosphate + H(+). The enzyme catalyses UTP + H2O = UMP + diphosphate + H(+). In terms of biological role, nucleoside triphosphate pyrophosphatase that hydrolyzes dTTP and UTP. May have a dual role in cell division arrest and in preventing the incorporation of modified nucleotides into cellular nucleic acids. The polypeptide is dTTP/UTP pyrophosphatase (Granulibacter bethesdensis (strain ATCC BAA-1260 / CGDNIH1)).